A 181-amino-acid chain; its full sequence is Transmembrane protein 190 (181 aa).

Residues 1–21 (MVASGIPALSLFLLMQGSVDG) form the signal peptide. Residues 22–81 (NGIQGFFYPWSCEGDVWDRESCGGQAAIENPNLCLRLRCCYRDGVCYHQRPDETMRRKHM) lie on the Extracellular side of the membrane. The 41-residue stretch at 31–71 (WSCEGDVWDRESCGGQAAIENPNLCLRLRCCYRDGVCYHQR) folds into the P-type domain. 3 cysteine pairs are disulfide-bonded: C33–C61, C43–C60, and C55–C67. The helical transmembrane segment at 82–102 (WALGWTCGGLLFLISSICLFW) threads the bilayer. Residues 103–181 (WAKRRDMLHL…EETEGGEDED (79 aa)) lie on the Cytoplasmic side of the membrane. Residues 135-181 (TLSDKKTSAGSVPTSLPTEGNADVSGATEGEGTTEGGEETEGGEDED) are disordered. Polar residues predominate over residues 142-152 (SAGSVPTSLPT). Over residues 170 to 181 (GGEETEGGEDED) the composition is skewed to acidic residues.

Its subcellular location is the membrane. The protein is Transmembrane protein 190 (TMEM190) of Canis lupus familiaris (Dog).